A 619-amino-acid chain; its full sequence is Zinc finger protein 668 (619 aa).

Met-1 is subject to N-acetylmethionine. Ser-10 carries the phosphoserine modification. The segment at 22 to 44 adopts a C2H2-type 1 zinc-finger fold; the sequence is YKCLFCTKTFPNAPRAARHAATH. The segment at 36–74 is disordered; that stretch reads RAARHAATHTPTDCTEEVREAQPKVDTEPKAEEASGDKV. Basic and acidic residues predominate over residues 51-71; sequence EEVREAQPKVDTEPKAEEASG. Glycyl lysine isopeptide (Lys-Gly) (interchain with G-Cter in SUMO2) cross-links involve residues Lys-59, Lys-65, and Lys-80. 11 consecutive C2H2-type zinc fingers follow at residues 84–106, 112–134, 140–162, 168–190, 196–218, 224–246, 252–274, 280–302, 308–330, 336–358, and 364–386; these read YACP…GRSH, FPCP…LASH, FRCT…QRGH, YACP…RRTH, YSCE…ERSH, FLCS…QRIH, YRCP…ERTH, FLCP…QRAH, YRCE…RRVH, FKCL…ALVH, and FRCE…SRMH. Lys-154 is covalently cross-linked (Glycyl lysine isopeptide (Lys-Gly) (interchain with G-Cter in SUMO2)). The residue at position 387 (Ser-387) is a Phosphoserine. The C2H2-type 13 zinc finger occupies 392–414; sequence FHCNACGKSFVVLSSLRKHERTH. The segment at 491-513 is disordered; it reads VGEAPSTLGDAGEVGGEETDEKP. Lys-512 participates in a covalent cross-link: Glycyl lysine isopeptide (Lys-Gly) (interchain with G-Cter in SUMO2). 3 C2H2-type zinc fingers span residues 516–538, 544–566, and 572–594; these read FVCR…ERSH, FPCT…SRTH, and YSCS…ERTH.

The protein belongs to the krueppel C2H2-type zinc-finger protein family.

The protein resides in the nucleus. In terms of biological role, may be involved in transcriptional regulation. May play a role in DNA repair process. The chain is Zinc finger protein 668 (Znf668) from Mus musculus (Mouse).